Here is a 737-residue protein sequence, read N- to C-terminus: Acetylcholinesterase (737 aa).

The N-terminal stretch at 1–38 is a signal peptide; that stretch reads MEIRGLLMGRLRLGRRMVPLGLLGVTALLLILPPFALV. A disordered region spans residues 141–168; that stretch reads HSGATPRRRGLTRRESNSDANDNDPLVV. N-linked (GlcNAc...) asparagine glycosylation occurs at Asn-220. Cys-228 and Cys-255 are disulfide-bonded. Residue Ser-360 is the Acyl-ester intermediate of the active site. A disulfide bridge connects residues Cys-414 and Cys-427. Residues Glu-486 and His-600 each act as charge relay system in the active site. A disulfide bond links Cys-562 and Cys-683. Asn-670 carries N-linked (GlcNAc...) asparagine glycosylation.

It belongs to the type-B carboxylesterase/lipase family.

Its subcellular location is the synapse. The enzyme catalyses acetylcholine + H2O = choline + acetate + H(+). Its function is as follows. Rapidly hydrolyzes choline released into the synapse. The polypeptide is Acetylcholinesterase (Ace) (Anopheles gambiae (African malaria mosquito)).